Reading from the N-terminus, the 238-residue chain is Pyridoxine 5'-phosphate synthase (238 aa).

3-amino-2-oxopropyl phosphate contacts are provided by N7 and R18. Residue H43 is the Proton acceptor of the active site. 1-deoxy-D-xylulose 5-phosphate is bound by residues R45 and H50. E70 serves as the catalytic Proton acceptor. A 1-deoxy-D-xylulose 5-phosphate-binding site is contributed by T100. H190 acts as the Proton donor in catalysis. Residues D191 and 213-214 (GH) contribute to the 3-amino-2-oxopropyl phosphate site.

This sequence belongs to the PNP synthase family. As to quaternary structure, homooctamer; tetramer of dimers.

The protein resides in the cytoplasm. The enzyme catalyses 3-amino-2-oxopropyl phosphate + 1-deoxy-D-xylulose 5-phosphate = pyridoxine 5'-phosphate + phosphate + 2 H2O + H(+). It participates in cofactor biosynthesis; pyridoxine 5'-phosphate biosynthesis; pyridoxine 5'-phosphate from D-erythrose 4-phosphate: step 5/5. In terms of biological role, catalyzes the complicated ring closure reaction between the two acyclic compounds 1-deoxy-D-xylulose-5-phosphate (DXP) and 3-amino-2-oxopropyl phosphate (1-amino-acetone-3-phosphate or AAP) to form pyridoxine 5'-phosphate (PNP) and inorganic phosphate. The protein is Pyridoxine 5'-phosphate synthase of Cytophaga hutchinsonii (strain ATCC 33406 / DSM 1761 / CIP 103989 / NBRC 15051 / NCIMB 9469 / D465).